The chain runs to 119 residues: Putative nitrilase-like protein YIL165C (119 aa).

Residues M1–T82 form the CN hydrolase domain. D21 serves as the catalytic Proton acceptor.

The protein belongs to the carbon-nitrogen hydrolase superfamily. Nitrilase family.

This is Putative nitrilase-like protein YIL165C from Saccharomyces cerevisiae (strain ATCC 204508 / S288c) (Baker's yeast).